An 87-amino-acid polypeptide reads, in one-letter code: Small ribosomal subunit protein uS15 (87 aa).

It belongs to the universal ribosomal protein uS15 family. As to quaternary structure, part of the 30S ribosomal subunit. Forms a bridge to the 50S subunit in the 70S ribosome, contacting the 23S rRNA.

One of the primary rRNA binding proteins, it binds directly to 16S rRNA where it helps nucleate assembly of the platform of the 30S subunit by binding and bridging several RNA helices of the 16S rRNA. Functionally, forms an intersubunit bridge (bridge B4) with the 23S rRNA of the 50S subunit in the ribosome. This Clostridium beijerinckii (strain ATCC 51743 / NCIMB 8052) (Clostridium acetobutylicum) protein is Small ribosomal subunit protein uS15.